Here is a 172-residue protein sequence, read N- to C-terminus: Ribosome maturation factor RimM (172 aa).

A PRC barrel domain is found at 95-168; the sequence is DDGEFYYHEI…RVDVEILEGL (74 aa).

The protein belongs to the RimM family. As to quaternary structure, binds ribosomal protein uS19.

The protein resides in the cytoplasm. An accessory protein needed during the final step in the assembly of 30S ribosomal subunit, possibly for assembly of the head region. Essential for efficient processing of 16S rRNA. May be needed both before and after RbfA during the maturation of 16S rRNA. It has affinity for free ribosomal 30S subunits but not for 70S ribosomes. In Streptococcus pneumoniae (strain P1031), this protein is Ribosome maturation factor RimM.